The following is a 1476-amino-acid chain: Membrane-associated guanylate kinase, WW and PDZ domain-containing protein 3 (1476 aa).

Residues 18–108 enclose the PDZ 1 domain; sequence CAVSWAGPPG…PIRLKTVKPG (91 aa). The tract at residues 18 to 108 is interaction with ADRB1 and TGFA; that stretch reads CAVSWAGPPG…PIRLKTVKPG (91 aa). In terms of domain architecture, Guanylate kinase-like spans 116–290; sequence RHYLSLQFQK…SSMDFRNYMM (175 aa). 123-130 is an ATP binding site; it reads FQKGSIDH. Residues 184–266 form a disordered region; it reads TYDGNFYGTP…ETREMHSETS (83 aa). Residues 193–204 show a composition bias toward pro residues; it reads PKPPAEPSPFQP. The residue at position 236 (Ser236) is a Phosphoserine. Residues 238 to 247 show a composition bias toward acidic residues; sequence LPEEEEDEDK. WW domains follow at residues 296–329 and 342–375; these read EPLP…DPRL and GELP…NPVE. The PDZ 2 domain occupies 413–495; that stretch reads RASLKKSTMG…NQYVNLTLCR (83 aa). The segment at 413–495 is interaction with PTEN; it reads RASLKKSTMG…NQYVNLTLCR (83 aa). The disordered stretch occupies residues 551 to 575; sequence LASDRLNGPSESSEQRASLASSGSS. The segment covering 559–575 has biased composition (polar residues); sequence PSESSEQRASLASSGSS. One can recognise a PDZ 3 domain in the interval 581-657; it reads TIPLIKGPKG…GADVPLLILR (77 aa). A Phosphoserine modification is found at Ser598. A disordered region spans residues 664–691; that stretch reads TKTAKTKTDTKENSGSLETINEPIPQPM. Ser702 carries the phosphoserine modification. The region spanning 729–811 is the PDZ 4 domain; that stretch reads DVFLRKQESG…NGHVLLTVRR (83 aa). Residues 729-811 form an interaction with ADGRB1 region; that stretch reads DVFLRKQESG…NGHVLLTVRR (83 aa). The segment at 818–844 is disordered; sequence KQPEDESHQAFSQNGSPRLNRAELPTR. Residues Ser833 and Ser916 each carry the phosphoserine modification. Residues 852–939 form the PDZ 5 domain; sequence DVTLQRKENE…TVTLTVVAEE (88 aa). The tract at residues 852–939 is interaction with LPAR2 and GRIN2B; the sequence is DVTLQRKENE…TVTLTVVAEE (88 aa). The tract at residues 939 to 966 is disordered; the sequence is EEHHGPPSGTNSARQSPALQHRPMGQAQ. The span at 946-956 shows a compositional bias: polar residues; sequence SGTNSARQSPA. The PDZ 6 domain maps to 1022-1104; sequence PVELERGPRG…KVLLLLRPGT (83 aa). Disordered stretches follow at residues 1109-1151 and 1168-1476; these read DHGD…ATED and TVQE…DKQL. Over residues 1114–1123 the composition is skewed to polar residues; sequence DTNSPSSSNV. 2 stretches are compositionally biased toward basic and acidic residues: residues 1193–1211 and 1230–1265; these read SKKD…RLKG and RHSE…ESKG. Residues 1285-1304 show a composition bias toward polar residues; it reads SSSPKKQQKIGGNSLSNTEG. 2 stretches are compositionally biased toward basic and acidic residues: residues 1317–1340 and 1350–1361; these read HPRD…KDLK and KSPEKKSSKVDE. At Ser1321 the chain carries Phosphoserine. A compositionally biased stretch (polar residues) spans 1363–1373; the sequence is SLPSKKTSSTA. Basic and acidic residues predominate over residues 1419–1437; that stretch reads ADDHKGRESEVTDRCRERA.

The protein belongs to the MAGUK family. As to quaternary structure, interacts with ADRB1, ADGRB1, LPAR2/EDG4, GRIN2B, PTEN, and PTPRB. Interacts with unidentified tyrosine phosphorylated proteins. Interacts with FZD4, FZD7, TGFA and VANGL2. Interacts with DLL1. Interacts with PRRG4 (via cytoplasmic domain). Widely expressed. Colocalizes with TGFA in neurons in the cortex and dentate gyrus, as well as in ependymal cells and some astrocytes (at protein level). Present in lens epithelium.

Its subcellular location is the cell membrane. It localises to the cell junction. The protein localises to the tight junction. The protein resides in the nucleus. In terms of biological role, acts as a scaffolding protein at cell-cell junctions, thereby regulating various cellular and signaling processes. Cooperates with PTEN to modulate the kinase activity of AKT1. Its interaction with PTPRB and tyrosine phosphorylated proteins suggests that it may link receptor tyrosine phosphatase with its substrates at the plasma membrane. In polarized epithelial cells, involved in efficient trafficking of TGFA to the cell surface. Regulates the ability of LPAR2 to activate ERK and RhoA pathways. Regulates the JNK signaling cascade via its interaction with FZD4 and VANGL2. This Mus musculus (Mouse) protein is Membrane-associated guanylate kinase, WW and PDZ domain-containing protein 3 (Magi3).